We begin with the raw amino-acid sequence, 310 residues long: Putative S-adenosyl-L-methionine-dependent methyltransferase MMAR_3534 (310 aa).

S-adenosyl-L-methionine is bound by residues aspartate 131 and 160 to 161 (DL).

The protein belongs to the UPF0677 family.

Functionally, exhibits S-adenosyl-L-methionine-dependent methyltransferase activity. This is Putative S-adenosyl-L-methionine-dependent methyltransferase MMAR_3534 from Mycobacterium marinum (strain ATCC BAA-535 / M).